Consider the following 333-residue polypeptide: N-acetyl-gamma-glutamyl-phosphate reductase (333 aa).

Residue Cys-145 is part of the active site.

This sequence belongs to the NAGSA dehydrogenase family. Type 1 subfamily.

It is found in the cytoplasm. It carries out the reaction N-acetyl-L-glutamate 5-semialdehyde + phosphate + NADP(+) = N-acetyl-L-glutamyl 5-phosphate + NADPH + H(+). It functions in the pathway amino-acid biosynthesis; L-arginine biosynthesis; N(2)-acetyl-L-ornithine from L-glutamate: step 3/4. In terms of biological role, catalyzes the NADPH-dependent reduction of N-acetyl-5-glutamyl phosphate to yield N-acetyl-L-glutamate 5-semialdehyde. The polypeptide is N-acetyl-gamma-glutamyl-phosphate reductase (Salinispora arenicola (strain CNS-205)).